Reading from the N-terminus, the 115-residue chain is Protachykinin-1 (115 aa).

The signal sequence occupies residues 1–19; it reads MKILVALAVLALVSTQLFA. A propeptide spanning residues 20–56 is cleaved from the precursor; it reads EDIRANDDLNYWSDWSDSDQIKEELPEPFEHLLQRIA. A methionine amide mark is found at Met68 and Met92.

Belongs to the tachykinin family. The substance P form is cleaved at Pro-59 by the prolyl endopeptidase FAP (seprase) activity (in vitro). Substance P is also cleaved and degraded by Angiotensin-converting enzyme (ACE) and neprilysin (MME).

It is found in the secreted. Functionally, tachykinins are active peptides which excite neurons, evoke behavioral responses, are potent vasodilators and secretagogues, and contract (directly or indirectly) many smooth muscles. The protein is Protachykinin-1 (TAC1) of Oryctolagus cuniculus (Rabbit).